A 217-amino-acid chain; its full sequence is Large ribosomal subunit protein uL3 (217 aa).

It belongs to the universal ribosomal protein uL3 family. Part of the 50S ribosomal subunit. Forms a cluster with proteins L14 and L19.

Functionally, one of the primary rRNA binding proteins, it binds directly near the 3'-end of the 23S rRNA, where it nucleates assembly of the 50S subunit. The sequence is that of Large ribosomal subunit protein uL3 from Mycobacterium ulcerans (strain Agy99).